We begin with the raw amino-acid sequence, 603 residues long: Serine/threonine-protein kinase HAL4/SAT4 (603 aa).

3 stretches are compositionally biased toward polar residues: residues 1–15 (MTGM…PQQT), 30–60 (RSGS…SASK), and 68–85 (TPTT…NTAG). Disordered regions lie at residues 1-86 (MTGM…TAGV), 150-171 (LSPK…PTPT), and 267-301 (DKYP…THNI). Residues 159 to 171 (NSNTAITPAPTPT) are compositionally biased toward low complexity. The span at 282–296 (PERDIYRSDQKDSKN) shows a compositional bias: basic and acidic residues. The Protein kinase domain occupies 316 to 590 (GRCQEVLGKG…GKQILNSEWG (275 aa)). ATP contacts are provided by residues 322–330 (LGKGAFGVV) and lysine 353. The active-site Proton acceptor is aspartate 449.

It belongs to the protein kinase superfamily. Ser/Thr protein kinase family.

The catalysed reaction is L-seryl-[protein] + ATP = O-phospho-L-seryl-[protein] + ADP + H(+). It carries out the reaction L-threonyl-[protein] + ATP = O-phospho-L-threonyl-[protein] + ADP + H(+). Functionally, promotes K(+) uptake, by the potassium transporter TRK1-TRK2, which leads to the subsequent cellular resistance to toxic cations such as Na(+), Li(+) and Ca(2+). The chain is Serine/threonine-protein kinase HAL4/SAT4 (SAT4) from Saccharomyces cerevisiae (strain ATCC 204508 / S288c) (Baker's yeast).